A 417-amino-acid chain; its full sequence is Protein-lysine 6-oxidase (417 aa).

The signal sequence occupies residues 1 to 21; sequence MRFAWTVLLLGPLQLCALVHC. A propeptide spans 22 to 168 (removed by BMP1); sequence APPAAGQQQP…PPSRVDGMVG (147 aa). The segment at 64-89 is disordered; it reads YQPQRRRDPGAAVPGAANASAQQPRT. Residues 73–84 show a composition bias toward low complexity; sequence GAAVPGAANASA. N-linked (GlcNAc...) asparagine glycans are attached at residues asparagine 81, asparagine 97, and asparagine 144. Residues 137–174 form a disordered region; sequence AGASRAENQTAPGEVPALSNLRPPSRVDGMVGDDPYNP. Tyrosine 187 is modified (sulfotyrosine). Residues 213-417 form a lysyl-oxidase like region; sequence PDLVADPYYI…YASGCTISPY (205 aa). 5 disulfide bridges follow: cysteine 238-cysteine 244, cysteine 291-cysteine 340, cysteine 324-cysteine 330, cysteine 351-cysteine 361, and cysteine 398-cysteine 412. Cu cation is bound by residues histidine 292, histidine 294, and histidine 296. The lysine tyrosylquinone (Lys-Tyr) cross-link spans 320–355; the sequence is KASFCLEDTSCDYGYHRRFACTAHTQGLSPGCYDTY. Tyrosine 355 carries the 2',4',5'-topaquinone modification.

The protein belongs to the lysyl oxidase family. Interacts with MFAP4. Interacts (via propeptide) with EFEMP2; this interaction is strong and facilitates formation of ternary complexes with ELN during elastic fiber assembly; this interaction limits interaction of EFEMP2 with FBLN5. The cofactor is Cu cation. Lysine tyrosylquinone residue is required as a cofactor. Post-translationally, the lysine tyrosylquinone cross-link (LTQ) is generated by condensation of the epsilon-amino group of a lysine with a topaquinone produced by oxidation of tyrosine. In terms of processing, proteolytically cleaved by BMP1 which removes the propeptide. Also proteolytically cleaved by ADAMTS2 and ADAMTS14, but not by ADAMTS3, at an additional cleavage site downstream of the BMP1 cleavage site. The propeptide plays a role in directing the deposition of this enzyme to elastic fibers, via interaction with tropoelastin. Cleavage by BMP1 to remove the propeptide does not increase enzymatic activity but increases binding to collagen. Cleavage by ADAMTS2 produces a form with reduced collagen-binding activity. Sulfated at Tyr-187 and also at either Tyr-183 or Tyr-184 which enhances binding to collagen. In terms of tissue distribution, heart, placenta, skeletal muscle, kidney, lung and pancreas.

It is found in the secreted. The protein resides in the extracellular space. It carries out the reaction L-lysyl-[protein] + O2 + H2O = (S)-2-amino-6-oxohexanoyl-[protein] + H2O2 + NH4(+). Responsible for the post-translational oxidative deamination of peptidyl lysine residues in precursors to fibrous collagen and elastin. Regulator of Ras expression. May play a role in tumor suppression. Plays a role in the aortic wall architecture. The chain is Protein-lysine 6-oxidase (LOX) from Homo sapiens (Human).